An 843-amino-acid chain; its full sequence is Protein P (843 aa).

A terminal protein domain (TP) region spans residues 1–177 (MPLSYQHFRK…FCGSPYSWEQ (177 aa)). The segment at 178–346 (ELQHGRLVFQ…YCLTHIVNLL (169 aa)) is spacer. Disordered stretches follow at residues 220–273 (QSRL…SSTS) and 289–316 (LSTSKRQSSSGHAVEFHNIPPSSARSQS). Over residues 289 to 299 (LSTSKRQSSSG) the composition is skewed to polar residues. Residues 347–690 (EDWGPCTEHG…YLNLYPVARQ (344 aa)) form a polymerase/reverse transcriptase domain (RT) region. In terms of domain architecture, Reverse transcriptase spans 357–600 (EHNIRIPRTP…YSLNFMGYVI (244 aa)). Mg(2+) is bound by residues aspartate 429, aspartate 551, and aspartate 552.

It belongs to the hepadnaviridae P protein family.

The catalysed reaction is DNA(n) + a 2'-deoxyribonucleoside 5'-triphosphate = DNA(n+1) + diphosphate. It carries out the reaction Endonucleolytic cleavage to 5'-phosphomonoester.. Activated by host HSP70 and HSP40 in vitro to be able to bind the epsilon loop of the pgRNA. Because deletion of the RNase H region renders the protein partly chaperone-independent, the chaperones may be needed indirectly to relieve occlusion of the RNA-binding site by this domain. Inhibited by several reverse-transcriptase inhibitors: Lamivudine, Adefovir and Entecavir. In terms of biological role, multifunctional enzyme that converts the viral RNA genome into dsDNA in viral cytoplasmic capsids. This enzyme displays a DNA polymerase activity that can copy either DNA or RNA templates, and a ribonuclease H (RNase H) activity that cleaves the RNA strand of RNA-DNA heteroduplexes in a partially processive 3'- to 5'-endonucleasic mode. Neo-synthesized pregenomic RNA (pgRNA) are encapsidated together with the P protein, and reverse-transcribed inside the nucleocapsid. Initiation of reverse-transcription occurs first by binding the epsilon loop on the pgRNA genome, and is initiated by protein priming, thereby the 5'-end of (-)DNA is covalently linked to P protein. Partial (+)DNA is synthesized from the (-)DNA template and generates the relaxed circular DNA (RC-DNA) genome. After budding and infection, the RC-DNA migrates in the nucleus, and is converted into a plasmid-like covalently closed circular DNA (cccDNA). The activity of P protein does not seem to be necessary for cccDNA generation, and is presumably released from (+)DNA by host nuclear DNA repair machinery. This Hepatitis B virus genotype C subtype ad (isolate Japan/S-179/1988) (HBV-C) protein is Protein P.